The primary structure comprises 156 residues: MENEKNYRPNVAAIVLSSSYPFECKIFIARRSDMDNIWQFPQGGIDKGESVKNALFRELKEEIGTDEVEIIAEYPEWLSYDFPSKIVKKMYPYDGQIQKYFLVRLKHGATININTKHPEFDDYQFVSVKQIFEMINHFKKNIYVRVIKYFEEKGYI.

The region spanning 6-148 (NYRPNVAAIV…KKNIYVRVIK (143 aa)) is the Nudix hydrolase domain. A Nudix box motif is present at residues 43 to 64 (GGIDKGESVKNALFRELKEEIG).

Belongs to the Nudix hydrolase family. RppH subfamily. A divalent metal cation serves as cofactor.

In terms of biological role, accelerates the degradation of transcripts by removing pyrophosphate from the 5'-end of triphosphorylated RNA, leading to a more labile monophosphorylated state that can stimulate subsequent ribonuclease cleavage. The sequence is that of RNA pyrophosphohydrolase from Campylobacter jejuni subsp. jejuni serotype O:2 (strain ATCC 700819 / NCTC 11168).